Reading from the N-terminus, the 507-residue chain is MSLQWLQQTRHELSWTWILLTTCIALISPLVLKGIYNVYFHPLRNIPGPKLAALTDFYAFYWNWIRDEGYSKQFSRLHEQYNSPIIRIGPNNVHTTQVEFYDVIFKSGSKWLKDKSFYKYFNGLDAMIEPYQYRTYRTHLAPLYAQRAIDGLAPKLRSDLTNSASGMMRQTKNGQTVNMAKVLRTLSTSMILHNLFSLDISLNDGDEYHPFLEAFEQLMTQSWLFVTYPMVPMVLSLIPGTSFARFNSSYTTFSNYCTAWNDEDMRKQRESEEQSTRDSHTKRYLSLKDDDARKKTAIPYPLDDVFNFVAGGSDTTAYTTACAFYHILSSPTVRENLVVELDEHSSIIRDEFDYNKIQNLPYLNAVIKETLRISVPVPGSLPRIVPQGGITIGSFSLPAGTGVSITQQAISFNEKIFPLPHSFLPERWIGPKSVGLDKWNIAFSRGPRQCIGTTLAYLELRCVIAYFFSRFDMALTGNCGDQLRWVDRFVAVNLDDVELQILADRWT.

A helical membrane pass occupies residues 15–35 (WTWILLTTCIALISPLVLKGI). An N-linked (GlcNAc...) asparagine glycan is attached at N247. Position 450 (C450) interacts with heme.

The protein belongs to the cytochrome P450 family. Heme serves as cofactor.

The protein resides in the membrane. The protein operates within alkaloid biosynthesis; ergot alkaloid biosynthesis. In terms of biological role, cytochrome P450 monooxygenase; part of the gene cluster that mediates the biosynthesis of fungal ergot alkaloid. DmaW catalyzes the first step of ergot alkaloid biosynthesis by condensing dimethylallyl diphosphate (DMAP) and tryptophan to form 4-dimethylallyl-L-tryptophan. The second step is catalyzed by the methyltransferase easF that methylates 4-dimethylallyl-L-tryptophan in the presence of S-adenosyl-L-methionine, resulting in the formation of 4-dimethylallyl-L-abrine. The catalase easC and the FAD-dependent oxidoreductase easE then transform 4-dimethylallyl-L-abrine to chanoclavine-I which is further oxidized by easD in the presence of NAD(+), resulting in the formation of chanoclavine-I aldehyde. Agroclavine dehydrogenase easG then mediates the conversion of chanoclavine-I aldehyde to agroclavine via a non-enzymatic adduct reaction: the substrate is an iminium intermediate that is formed spontaneously from chanoclavine-I aldehyde in the presence of glutathione. The presence of easA is not required to complete this reaction. Further conversion of agroclavine to paspalic acid is a two-step process involving oxidation of agroclavine to elymoclavine and of elymoclavine to paspalic acid, the second step being performed by the elymoclavine oxidase cloA. Paspalic acid is then further converted to D-lysergic acid. Ergopeptines are assembled from D-lysergic acid and three different amino acids by the D-lysergyl-peptide-synthetases composed each of a monomudular and a trimodular nonribosomal peptide synthetase subunit. LpsB and lpsC encode the monomodular subunits responsible for D-lysergic acid activation and incorporation into the ergopeptine backbone. LpsA1 and A2 subunits encode the trimodular nonribosomal peptide synthetase assembling the tripeptide portion of ergopeptines. LpsA1 is responsible for formation of the major ergopeptine, ergotamine, and lpsA2 for alpha-ergocryptine, the minor ergopeptine of the total alkaloid mixture elaborated by C.purpurea. D-lysergyl-tripeptides are assembled by the nonribosomal peptide synthetases and released as N-(D-lysergyl-aminoacyl)-lactams. Cyclolization of the D-lysergyl-tripeptides is performed by the Fe(2+)/2-ketoglutarate-dependent dioxygenase easH which introduces a hydroxyl group into N-(D-lysergyl-aminoacyl)-lactam at alpha-C of the aminoacyl residue followed by spontaneous condensation with the terminal lactam carbonyl group. In Claviceps purpurea (strain 20.1) (Ergot fungus), this protein is Cytochrome P450 monooxygenase cloA.